We begin with the raw amino-acid sequence, 740 residues long: MLFLPILILNLLIITHAIDIIPREVLFQDPKYSSVSLSPDAKQVGYVAPDENGIRNVFTRCSSCSYSRQVTFETEHPILNYVWTAIPDVILFTQDNHGDENTRIYKKNISATAIAADKTQRVVISEKPMVKAMILSNNLISETVLIGMNDENPALHNIYAFNCQTDELKLVLQNRRFSIFFFDNDLNVRLASEEGPDGEMIYYRPRSNEGARTTEQNTWVEYLRIQHDDKAITMPITFDKSNNFMYWIMGDGSDLGNLVVFPFEDPQQKEILYTAQRAQIGNVLIHPTDKTLLAVTEVYHKPELFVANETFMEDLQYLVNMKPSGSMNIVSMSIDMSTWLVTYSSSDEPYDIYLYRRWNKKAELFMSTRPELKKYTLNKQIGFDFRARDEMTIQAYLSLPPQAPLLKSSQVPDGDRPYANLGMIPAVPQKMIVLVHGGPKARDHYGFSPMNAWLTNRGYSVLQVNFRGSTGFGKRLTNAGNGEWGRKMHFDILDAVEFAVSKGIANRSEVAVMGGSYGGYETLVALTFTPQTFACGVDIVGPSNLISLVQAIPPYWLGFRKDLIKMVGADISDEEGRQSLQSRSPLFFADRVTKPIMIIQGANDPRVKQAESDQFVAALEKKHIPVTYLLYPDEGHGVRKPQNSMEQHGHIETFLQQCLGGETQPFQPGQYNSSAIIKKIGIEGAAIARQNLQIAQNQFAQQLPRGPVAPSIFYRPPVRAQRVMLAPNQNVMNRIFPVQG.

Residue Met1 is a topological domain, cytoplasmic. A helical; Signal-anchor for type II membrane protein transmembrane segment spans residues 2–22 (LFLPILILNLLIITHAIDIIP). Residues 23–740 (REVLFQDPKY…VMNRIFPVQG (718 aa)) are Lumenal-facing. Residues Asn108, Asn308, and Asn506 are each glycosylated (N-linked (GlcNAc...) asparagine). Catalysis depends on charge relay system residues Ser516, Asp604, and His636. Cys535 and Cys658 form a disulfide bridge. The N-linked (GlcNAc...) asparagine glycan is linked to Asn672.

The protein belongs to the peptidase S9B family. DPPIV subfamily.

The protein localises to the cell membrane. Functionally, removes N-terminal dipeptides sequentially from polypeptides. Essential for control of distal tip cell migration. The protein is Dipeptidyl peptidase family member 6 (dpf-6) of Caenorhabditis elegans.